Consider the following 301-residue polypeptide: tRNA-cytidine(32) 2-sulfurtransferase (301 aa).

The short motif at 55-60 is the PP-loop motif element; the sequence is SGGKDS. [4Fe-4S] cluster contacts are provided by cysteine 130, cysteine 133, and cysteine 221.

The protein belongs to the TtcA family. As to quaternary structure, homodimer. The cofactor is Mg(2+). [4Fe-4S] cluster serves as cofactor.

The protein localises to the cytoplasm. It carries out the reaction cytidine(32) in tRNA + S-sulfanyl-L-cysteinyl-[cysteine desulfurase] + AH2 + ATP = 2-thiocytidine(32) in tRNA + L-cysteinyl-[cysteine desulfurase] + A + AMP + diphosphate + H(+). Its pathway is tRNA modification. In terms of biological role, catalyzes the ATP-dependent 2-thiolation of cytidine in position 32 of tRNA, to form 2-thiocytidine (s(2)C32). The sulfur atoms are provided by the cysteine/cysteine desulfurase (IscS) system. This is tRNA-cytidine(32) 2-sulfurtransferase from Acinetobacter baumannii (strain AB307-0294).